Consider the following 229-residue polypeptide: Matrix protein (229 aa).

The span at 1–12 (MSSFKKILGLSS) shows a compositional bias: low complexity. The segment at 1 to 35 (MSSFKKILGLSSKSHKKSKKMGLPPPYDESCPMET) is disordered. Residues 2–4 (SSF) carry the dynamin binding motif. Positions 24 to 27 (PPPY) match the PPXY motif motif. The PTAP/PSAP motif motif lies at 37–40 (PSAP).

The protein belongs to the vesiculoviruses matrix protein family. As to quaternary structure, homomultimer. Interacts with viral nucleocapsid; this interaction contributes to the virion assembly. Interacts with the viral envelope glycoprotein; this interaction contributes to the virion assembly. Interacts with host RAE1-NUP98 complex. Interacts with host NEDD4 and TSG101. Interacts with host dynamin. Interacts with host NDUFAF4; the interaction inhibits viral propagation and is independent of interferon activation. Interacts with host GTF2H5; the interaction may inhibit host transcription. Phosphorylated by host.

Its subcellular location is the virion. It localises to the host endomembrane system. The protein resides in the host nucleus membrane. The protein localises to the host nucleus. It is found in the host cytoplasm. In terms of biological role, forms a double layer around the helical nucleocapsid, the inner matrix layer binding to the N helix and the outer matrix layer binding to the envelope glycoprotein. Plays a major role in assembly and budding of virion, by recruiting cellular partners of the ESCRT complexes that play a key role in releasing the budding particle from the host membrane. Condensates the ribonucleocapsid core during virus assembly. Inhibits the host mRNA nuclear export thereby inducing the shut off of cellular transcription and preventing the interferon signaling and the establishment of antiviral state in infected cells. This shutoff presumably inhibits interferon signaling and thus establishment of antiviral state in virus infected cells. Induces cell-rounding, cytoskeleton disorganization and apoptosis in infected cell. Inhibits host transcription, possibly through interaction with host DNA repair factor IIH/TFIIH GTF2H5 subunit. This Aedes (Bovine) protein is Matrix protein (M).